The primary structure comprises 492 residues: Protein nucleotidyltransferase YdiU (492 aa).

ATP-binding residues include Gly-94, Gly-96, Arg-97, Lys-117, Asp-129, Gly-130, Arg-180, and Arg-187. Catalysis depends on Asp-257, which acts as the Proton acceptor. Residues Asn-258 and Asp-267 each contribute to the Mg(2+) site. ATP is bound at residue Asp-267.

This sequence belongs to the SELO family. The cofactor is Mg(2+). It depends on Mn(2+) as a cofactor.

The catalysed reaction is L-seryl-[protein] + ATP = 3-O-(5'-adenylyl)-L-seryl-[protein] + diphosphate. The enzyme catalyses L-threonyl-[protein] + ATP = 3-O-(5'-adenylyl)-L-threonyl-[protein] + diphosphate. It catalyses the reaction L-tyrosyl-[protein] + ATP = O-(5'-adenylyl)-L-tyrosyl-[protein] + diphosphate. It carries out the reaction L-histidyl-[protein] + UTP = N(tele)-(5'-uridylyl)-L-histidyl-[protein] + diphosphate. The catalysed reaction is L-seryl-[protein] + UTP = O-(5'-uridylyl)-L-seryl-[protein] + diphosphate. The enzyme catalyses L-tyrosyl-[protein] + UTP = O-(5'-uridylyl)-L-tyrosyl-[protein] + diphosphate. Nucleotidyltransferase involved in the post-translational modification of proteins. It can catalyze the addition of adenosine monophosphate (AMP) or uridine monophosphate (UMP) to a protein, resulting in modifications known as AMPylation and UMPylation. This chain is Protein nucleotidyltransferase YdiU, found in Halalkalibacterium halodurans (strain ATCC BAA-125 / DSM 18197 / FERM 7344 / JCM 9153 / C-125) (Bacillus halodurans).